The sequence spans 576 residues: Arginine--tRNA ligase (576 aa).

Residues 122 to 132 (PNVAKEMHVGH) carry the 'HIGH' region motif.

This sequence belongs to the class-I aminoacyl-tRNA synthetase family. As to quaternary structure, monomer.

It is found in the cytoplasm. It carries out the reaction tRNA(Arg) + L-arginine + ATP = L-arginyl-tRNA(Arg) + AMP + diphosphate. In Thermobifida fusca (strain YX), this protein is Arginine--tRNA ligase.